The following is a 503-amino-acid chain: Envelope glycoprotein p57 (503 aa).

Residues 1–22 (MQLSMSFLIGFGTLVLALSART) form the signal peptide. Residues 23–467 (FDLQGLSCNT…FLNPLGWLRD (445 aa)) are Extracellular-facing. Residues N63, N109, N139, N192, N196, N202, N221, N230, and N235 are each glycosylated (N-linked (GlcNAc...) asparagine; by host). Positions 274 to 315 (ILQSLLLGVFGTGIASASQFLRGWLNHPDIIGYIVNGVGVVW) are fusion peptide. N-linked (GlcNAc...) asparagine; by host glycosylation is found at N321, N328, N388, and N438. A helical membrane pass occupies residues 468-488 (LLAWAAWLGGVLYLISLCVSL). Over 489-503 (PASFARRRRLGRWQE) the chain is Cytoplasmic.

In terms of processing, glycosated; Stabilizes it. Post-translationally, a portion of p57 is cleaved into p27 and p29. p27 and p29 are called gp43 when glycosylated, as they seem to have the same molecular weight.

The protein resides in the host endoplasmic reticulum membrane. It localises to the virion. It is found in the host cell membrane. In terms of biological role, unprocessed envelope protein p57 is thought to be involved in attachment of the virus to its cell surface receptor. This attachment induces virion internalization predominantly through clathrin-dependent endocytosis. Envelope protein p27 and p29 presumably linked by disulfide bond are the viral type II fusion protein, involved in pH-dependent fusion within early endosomes after internalization of the virion by endocytosis. The polypeptide is Envelope glycoprotein p57 (G) (Borna disease virus 1 (BoDV-1)).